The chain runs to 628 residues: Biosynthetic arginine decarboxylase (628 aa).

Lys99 bears the N6-(pyridoxal phosphate)lysine mark. 279–289 (VDVGGGLGIDY) contributes to the substrate binding site.

The protein belongs to the Orn/Lys/Arg decarboxylase class-II family. SpeA subfamily. It depends on Mg(2+) as a cofactor. Requires pyridoxal 5'-phosphate as cofactor.

The enzyme catalyses L-arginine + H(+) = agmatine + CO2. Its pathway is amine and polyamine biosynthesis; agmatine biosynthesis; agmatine from L-arginine: step 1/1. In terms of biological role, catalyzes the biosynthesis of agmatine from arginine. In Xylella fastidiosa (strain M12), this protein is Biosynthetic arginine decarboxylase.